The following is a 309-amino-acid chain: Shugoshin (309 aa).

Residues 42-77 adopt a coiled-coil conformation; that stretch reads NLLLKQQVVQCTKTIEKLRNENVALRQKNQELIDGT. Disordered regions lie at residues 165–195 and 210–309; these read FDNNSSQSTSSIQNAVNGTPRKKQSVGKGRR and EEAS…NTFF. Positions 167-178 are enriched in low complexity; the sequence is NNSSQSTSSIQN. Residues 184 to 193 show a composition bias toward basic residues; it reads PRKKQSVGKG.

Belongs to the shugoshin family. As to expression, expressed in gonads.

The protein localises to the nucleus. It is found in the chromosome. Its subcellular location is the centromere. In terms of biological role, component of cell cycle checkpoints, which ensures chromosome segregation during meiosis and mitosis. During meiotic prophase, it is involved in the regulation of the synapsis checkpoint, which monitors whether homologous chromosomes have synapsed, and the DNA damage response. Plays a central role in chromosome cohesion during cell division by preventing premature dissociation of cohesin complex after prophase, when most of cohesin complex dissociates from chromosomes arms. The protein is Shugoshin of Caenorhabditis elegans.